A 235-amino-acid chain; its full sequence is 7-cyano-7-deazaguanine synthase (235 aa).

12–22 (FSGGQDSTACL) lines the ATP pocket. Residues C200, C215, C218, and C221 each contribute to the Zn(2+) site.

The protein belongs to the QueC family. It depends on Zn(2+) as a cofactor.

The catalysed reaction is 7-carboxy-7-deazaguanine + NH4(+) + ATP = 7-cyano-7-deazaguanine + ADP + phosphate + H2O + H(+). It participates in purine metabolism; 7-cyano-7-deazaguanine biosynthesis. Its function is as follows. Catalyzes the ATP-dependent conversion of 7-carboxy-7-deazaguanine (CDG) to 7-cyano-7-deazaguanine (preQ(0)). In Methylibium petroleiphilum (strain ATCC BAA-1232 / LMG 22953 / PM1), this protein is 7-cyano-7-deazaguanine synthase.